Here is a 513-residue protein sequence, read N- to C-terminus: Calcium-dependent protein kinase 24 (513 aa).

The tract at residues 1 to 33 (MQPDPSGSGGDGNANAKAKLAPPPVTAAGGRPV) is disordered. Residues 47-305 (YRIGKKLGQG…AHEVLCHPWI (259 aa)) enclose the Protein kinase domain. Residues 53-61 (LGQGQFGTT) and lysine 76 contribute to the ATP site. The Proton acceptor role is filled by aspartate 171. Residues 311–341 (APDKPIDSAVLSRLKHFSAMNKLKKMALRVI) form an autoinhibitory domain region. 4 EF-hand domains span residues 348 to 383 (EEIGGLKELFKMIDTDDSGTITFDELKEGLKRVGSE), 384 to 419 (LTEHEIQALMEAADIDNSGTIDYGEFIAATLHMNKL), 420 to 455 (EREENLVSAFSFFDKDGSGFITIDELSQACREFGLD), and 458 to 489 (HLEDMIKDVDQNNDGQIDYSEFTAMMRKGNAG). The Ca(2+) site is built by aspartate 361, aspartate 363, serine 365, threonine 367, glutamate 372, aspartate 397, aspartate 399, serine 401, threonine 403, glutamate 408, aspartate 433, aspartate 435, serine 437, glutamate 444, aspartate 467, asparagine 469, aspartate 471, glutamine 473, and glutamate 478.

It belongs to the protein kinase superfamily. Ser/Thr protein kinase family. CDPK subfamily. Expressed in roots.

Its subcellular location is the cytoplasm. The enzyme catalyses L-seryl-[protein] + ATP = O-phospho-L-seryl-[protein] + ADP + H(+). The catalysed reaction is L-threonyl-[protein] + ATP = O-phospho-L-threonyl-[protein] + ADP + H(+). Its activity is regulated as follows. Activated by calcium. Autophosphorylation may play an important role in the regulation of the kinase activity. Functionally, may play a role in signal transduction pathways that involve calcium as a second messenger. Possesses calcium-dependent protein kinase activity in vitro. The chain is Calcium-dependent protein kinase 24 from Oryza sativa subsp. japonica (Rice).